The chain runs to 518 residues: Glucose-6-phosphate 1-dehydrogenase (518 aa).

NADP(+) contacts are provided by residues 36-43 (GASGDLAK), arginine 70, and lysine 169. D-glucose 6-phosphate contacts are provided by residues lysine 169, 199–203 (HYLGK), glutamate 237, and aspartate 256. The Proton acceptor role is filled by histidine 261. Arginine 356 serves as a coordination point for NADP(+). D-glucose 6-phosphate-binding residues include lysine 359 and arginine 364. Lysine 365, arginine 369, and arginine 392 together coordinate NADP(+). Glutamine 394 is a binding site for D-glucose 6-phosphate. NADP(+) is bound by residues 400–402 (YFK), 420–422 (DLT), arginine 486, tyrosine 502, and tryptophan 508.

Belongs to the glucose-6-phosphate dehydrogenase family.

Its subcellular location is the cytoplasm. It is found in the cytosol. It catalyses the reaction D-glucose 6-phosphate + NADP(+) = 6-phospho-D-glucono-1,5-lactone + NADPH + H(+). It functions in the pathway carbohydrate degradation; pentose phosphate pathway; D-ribulose 5-phosphate from D-glucose 6-phosphate (oxidative stage): step 1/3. In terms of biological role, cytosolic glucose-6-phosphate dehydrogenase that catalyzes the first and rate-limiting step of the oxidative branch within the pentose phosphate pathway/shunt, an alternative route to glycolysis for the dissimilation of carbohydrates and a major source of reducing power and metabolic intermediates for fatty acid and nucleic acid biosynthetic processes. The chain is Glucose-6-phosphate 1-dehydrogenase (Zw) from Drosophila yakuba (Fruit fly).